We begin with the raw amino-acid sequence, 144 residues long: Large ribosomal subunit protein uL15 (144 aa).

Residues 1–53 (MFLNTIKPGEGAKHAKRRVGRGIGSGLGKTAGRGHKGQKSRSGGFHKVGFEGG) are disordered. The span at 21–31 (RGIGSGLGKTA) shows a compositional bias: gly residues.

Belongs to the universal ribosomal protein uL15 family. As to quaternary structure, part of the 50S ribosomal subunit.

Functionally, binds to the 23S rRNA. The sequence is that of Large ribosomal subunit protein uL15 from Laribacter hongkongensis (strain HLHK9).